A 360-amino-acid polypeptide reads, in one-letter code: Sensor histidine kinase LiaS (360 aa).

Residues 1 to 15 (MRKKMLASLQWRAIR) are Cytoplasmic-facing. The chain crosses the membrane as a helical span at residues 16-36 (MTTGISLLLFVCLISFMMFYY). Over 37–47 (RLDPLVLLSSS) the chain is Extracellular. A helical transmembrane segment spans residues 48–68 (WFGIPFILILLLISVTVGFAS). Residues 69 to 360 (GYMYGNRLKT…ENERDSSIID (292 aa)) lie on the Cytoplasmic side of the membrane. Residues 74–126 (NRLKTRIDTLIESILTFENGNFAYRIPPLGDDEIGLAADQLNEMAKRVELQVA) enclose the HAMP domain. Residues 153 to 346 (RLARDLHDAV…QIEVKVPIFP (194 aa)) form the Histidine kinase domain. At histidine 159 the chain carries Phosphohistidine; by autocatalysis.

It localises to the cell membrane. The enzyme catalyses ATP + protein L-histidine = ADP + protein N-phospho-L-histidine.. In terms of biological role, member of the two-component regulatory system LiaS/LiaR probably involved in response to a subset of cell wall-active antibiotics that interfere with the lipid II cycle in the cytoplasmic membrane (bacitracin, nisin, ramoplanin and vancomycin). Also seems to be involved in response to cationic antimicrobial peptides and secretion stress. Activates probably LiaR by phosphorylation. The protein is Sensor histidine kinase LiaS (liaS) of Bacillus subtilis (strain 168).